Reading from the N-terminus, the 397-residue chain is MSLGKDRYSLPRSYKRVSHAKEKARPELRKFGWDTLGYAESFNPPPLKDTIPRVDGKKISVDEFRRDFERPRIPVILTGLTDDWNAHEKWTLERLSKKYRNQNFKCGEDDHGNSVRMKMKYYHDYMLNNRDDSPLYIFDSSFAERRKTKKLSEDYKVPKFFEDDLFHYADHKKRPPHRWFVMGPARSGTAIHIDPLGTSAWNSLLLGYKRWVLIPPNAPRDLVKPMAHEKGKHPDEGITWFQTVYKRVRSPAWPKEYAPIECRQGPGETMFVPSGWWHVVINEGLTVAVTHNYCSVENLHLVWPKTVRGRPKLSKHWHRKLAESRPEVLKIINSCTDTPPQSLNDSSSDSSSSSSSSDDSSDSETEEDSGRCGLGNRKRRNDVCTSECPEKISNSMV.

The region spanning 146 to 310 (RKTKKLSEDY…LVWPKTVRGR (165 aa)) is the JmjC domain. Thr-189 contacts substrate. 2 residues coordinate Fe cation: His-192 and Asp-194. A 2-oxoglutarate-binding site is contributed by Asn-202. Lys-209 provides a ligand contact to substrate. His-278 lines the Fe cation pocket. Thr-290 contributes to the 2-oxoglutarate binding site. A compositionally biased stretch (polar residues) spans 334 to 344 (SCTDTPPQSLN). The tract at residues 334–383 (SCTDTPPQSLNDSSSDSSSSSSSSDDSSDSETEEDSGRCGLGNRKRRNDV) is disordered. Over residues 345–358 (DSSSDSSSSSSSSD) the composition is skewed to low complexity.

This sequence belongs to the JMJD6 family. As to quaternary structure, interacts with ced-5 and ced-12. Fe(2+) is required as a cofactor.

The protein localises to the nucleus. In terms of biological role, dioxygenase that can both act as a histone arginine demethylase and a lysyl-hydroxylase. This chain is Bifunctional arginine demethylase and lysyl-hydroxylase psr-1 (psr-1), found in Caenorhabditis briggsae.